Consider the following 226-residue polypeptide: uncharacterized protein (226 aa).

The region spanning 168–226 is the HTH cro/C1-type domain; that stretch reads ISALRNKLGLTQTDLGKRINVDANVIRNIETGDLVAFNVQDPMVRSLAYALGIRTIKYQ. A DNA-binding region (H-T-H motif) is located at residues 179-198; the sequence is QTDLGKRINVDANVIRNIET.

This is an uncharacterized protein from Acanthamoeba polyphaga mimivirus (APMV).